Reading from the N-terminus, the 338-residue chain is Porphobilinogen deaminase (338 aa).

The residue at position 265 (C265) is an S-(dipyrrolylmethanemethyl)cysteine.

The protein belongs to the HMBS family. Dipyrromethane is required as a cofactor.

It carries out the reaction 4 porphobilinogen + H2O = hydroxymethylbilane + 4 NH4(+). Its pathway is porphyrin-containing compound metabolism; protoporphyrin-IX biosynthesis; coproporphyrinogen-III from 5-aminolevulinate: step 2/4. Functionally, tetrapolymerization of the monopyrrole PBG into the hydroxymethylbilane pre-uroporphyrinogen in several discrete steps. The chain is Porphobilinogen deaminase (HEM3) from Yarrowia lipolytica (strain CLIB 122 / E 150) (Yeast).